The chain runs to 171 residues: 3-hydroxydecanoyl-[acyl-carrier-protein] dehydratase (171 aa).

The active site involves His70.

The protein belongs to the thioester dehydratase family. FabA subfamily. Homodimer.

The protein localises to the cytoplasm. The catalysed reaction is a (3R)-hydroxyacyl-[ACP] = a (2E)-enoyl-[ACP] + H2O. It catalyses the reaction (3R)-hydroxydecanoyl-[ACP] = (2E)-decenoyl-[ACP] + H2O. It carries out the reaction (2E)-decenoyl-[ACP] = (3Z)-decenoyl-[ACP]. Its pathway is lipid metabolism; fatty acid biosynthesis. Its function is as follows. Necessary for the introduction of cis unsaturation into fatty acids. Catalyzes the dehydration of (3R)-3-hydroxydecanoyl-ACP to E-(2)-decenoyl-ACP and then its isomerization to Z-(3)-decenoyl-ACP. Can catalyze the dehydratase reaction for beta-hydroxyacyl-ACPs with saturated chain lengths up to 16:0, being most active on intermediate chain length. This is 3-hydroxydecanoyl-[acyl-carrier-protein] dehydratase from Stenotrophomonas maltophilia (strain K279a).